A 226-amino-acid chain; its full sequence is Probable transcriptional regulator RABBIT EARS (226 aa).

The C2H2-type zinc-finger motif lies at 55–77 (YSCSFCGREFKSAQALGGHMNVH). A disordered region spans residues 80–102 (DRARLKQQSLSPSSTDQATPPEC). A compositionally biased stretch (polar residues) spans 85 to 97 (KQQSLSPSSTDQA). An EAR-like (transcriptional repression) motif is present at residues 212–216 (LDLEL).

Strongly expressed in inflorescences and flowers, and weakly in siliques, seedlings and roots. In flowers, it is expressed in petal primordia and their precursor cells. Also expressed in the lateral root caps and the basal cells of lateral roots.

It is found in the nucleus. Its function is as follows. Probable transcriptional regulator essential for petal development. Required for the early development of the organ primordia of the second whorl. Acts downstream of AP1 and PTL. This is Probable transcriptional regulator RABBIT EARS (RBE) from Arabidopsis thaliana (Mouse-ear cress).